Here is a 340-residue protein sequence, read N- to C-terminus: Phosphoribosylformylglycinamidine cyclo-ligase (340 aa).

The protein belongs to the AIR synthase family.

Its subcellular location is the cytoplasm. It carries out the reaction 2-formamido-N(1)-(5-O-phospho-beta-D-ribosyl)acetamidine + ATP = 5-amino-1-(5-phospho-beta-D-ribosyl)imidazole + ADP + phosphate + H(+). It participates in purine metabolism; IMP biosynthesis via de novo pathway; 5-amino-1-(5-phospho-D-ribosyl)imidazole from N(2)-formyl-N(1)-(5-phospho-D-ribosyl)glycinamide: step 2/2. This chain is Phosphoribosylformylglycinamidine cyclo-ligase, found in Streptococcus pyogenes serotype M3 (strain ATCC BAA-595 / MGAS315).